Here is a 247-residue protein sequence, read N- to C-terminus: Protein eak-4 (247 aa).

The N-myristoyl glycine moiety is linked to residue Gly2.

In terms of tissue distribution, expressed in the 2 embryonic head hypodermal cells XXXL/R.

It is found in the cell membrane. Functionally, together with eak-6 and sdf-9, negatively regulates dauer larva formation downstream of the insulin-like receptor daf-2 and in parallel with age-1, pdk-1 and akt-1. This chain is Protein eak-4, found in Caenorhabditis elegans.